We begin with the raw amino-acid sequence, 186 residues long: Threonylcarbamoyl-AMP synthase (186 aa).

One can recognise a YrdC-like domain in the interval 2-186 (VSNLQQVVKA…ARTEQLLRQG (185 aa)).

Belongs to the SUA5 family. TsaC subfamily.

Its subcellular location is the cytoplasm. It catalyses the reaction L-threonine + hydrogencarbonate + ATP = L-threonylcarbamoyladenylate + diphosphate + H2O. Functionally, required for the formation of a threonylcarbamoyl group on adenosine at position 37 (t(6)A37) in tRNAs that read codons beginning with adenine. Catalyzes the conversion of L-threonine, HCO(3)(-)/CO(2) and ATP to give threonylcarbamoyl-AMP (TC-AMP) as the acyladenylate intermediate, with the release of diphosphate. This is Threonylcarbamoyl-AMP synthase from Vibrio vulnificus (strain CMCP6).